A 433-amino-acid polypeptide reads, in one-letter code: MLNFISKPVGCLKGEITVPGDKSISHRSIIFGAIAIGTSVIDGFLDGEDCIATLKAFQSMGVRIEGPDKQRVIIHGVGKYGLKQPQNIIDCGNSGTSMRLLAGLLAAQQFDSQLTGDESLLKRPMLRISRPLSQMGADVTTQDGKPPIVIKGGKKLNGVHYVMPEASAQVKSCLLLAGMYAEGQTKITENAVSRDHTERMLRTFSYPVQIQDGTIVIDRNGECHGTRLNIPGDISSAAFFIVAASITPDSDVLIRNVGINPTRTGIIHILTEMGADIRILNQRAYGEEPVADLHIRYSQLKGIDIPVSMVPLAIDEFPVIFIAAACAQGKTTLHGAKELRLKESDRIGAMVDGLNQLGVHAEGFDDGILIEGGSIQGGEVNSRGDHRIAMSFAIAGAVASAPVTIKNCANVATSFPSFVTTANMLHFQIEEYS.

3-phosphoshikimate is bound by residues K22, S23, and R27. K22 is a binding site for phosphoenolpyruvate. The phosphoenolpyruvate site is built by G95 and R123. 3-phosphoshikimate is bound by residues S167, Q169, D315, and K342. Position 169 (Q169) interacts with phosphoenolpyruvate. D315 acts as the Proton acceptor in catalysis. Residues R346 and R387 each contribute to the phosphoenolpyruvate site.

Belongs to the EPSP synthase family. As to quaternary structure, monomer.

It localises to the cytoplasm. The enzyme catalyses 3-phosphoshikimate + phosphoenolpyruvate = 5-O-(1-carboxyvinyl)-3-phosphoshikimate + phosphate. Its pathway is metabolic intermediate biosynthesis; chorismate biosynthesis; chorismate from D-erythrose 4-phosphate and phosphoenolpyruvate: step 6/7. Its function is as follows. Catalyzes the transfer of the enolpyruvyl moiety of phosphoenolpyruvate (PEP) to the 5-hydroxyl of shikimate-3-phosphate (S3P) to produce enolpyruvyl shikimate-3-phosphate and inorganic phosphate. The sequence is that of 3-phosphoshikimate 1-carboxyvinyltransferase from Legionella pneumophila (strain Lens).